The following is a 139-amino-acid chain: Aspartate 1-decarboxylase (139 aa).

Ser-25 serves as the catalytic Schiff-base intermediate with substrate; via pyruvic acid. The residue at position 25 (Ser-25) is a Pyruvic acid (Ser). Thr-57 serves as a coordination point for substrate. The Proton donor role is filled by Tyr-58. Substrate is bound at residue Gly-73 to Ala-75. A disordered region spans residues Glu-116–Ala-139. A compositionally biased stretch (polar residues) spans Gly-129–Ala-139.

The protein belongs to the PanD family. Heterooctamer of four alpha and four beta subunits. Pyruvate is required as a cofactor. Post-translationally, is synthesized initially as an inactive proenzyme, which is activated by self-cleavage at a specific serine bond to produce a beta-subunit with a hydroxyl group at its C-terminus and an alpha-subunit with a pyruvoyl group at its N-terminus.

It localises to the cytoplasm. It carries out the reaction L-aspartate + H(+) = beta-alanine + CO2. Its pathway is cofactor biosynthesis; (R)-pantothenate biosynthesis; beta-alanine from L-aspartate: step 1/1. In terms of biological role, catalyzes the pyruvoyl-dependent decarboxylation of aspartate to produce beta-alanine. This is Aspartate 1-decarboxylase from Nocardia farcinica (strain IFM 10152).